Here is a 207-residue protein sequence, read N- to C-terminus: Serotonin N-acetyltransferase (207 aa).

Residue Thr31 is modified to Phosphothreonine; by PKA. Positions 35-196 (NEFRCLTPKD…TFTEMHCSLR (162 aa)) constitute an N-acetyltransferase domain. Position 124 (Leu124) interacts with substrate. Acetyl-CoA is bound by residues 124 to 126 (LAV) and 132 to 137 (QQGKGS). Met159 lines the substrate pocket. 168 to 170 (YQR) contacts acetyl-CoA. Ser205 carries the phosphoserine modification.

Belongs to the acetyltransferase family. AANAT subfamily. In terms of assembly, monomer. Interacts with several 14-3-3 proteins, including YWHAB, YWHAE, YWHAG and YWHAZ, preferentially when phosphorylated at Thr-31. Phosphorylation on Ser-205 also allows binding to YWHAZ, but with lower affinity. The interaction with YWHAZ considerably increases affinity for arylalkylamines and acetyl-CoA and protects the enzyme from dephosphorylation and proteasomal degradation. It may also prevent thiol-dependent inactivation. Post-translationally, cAMP-dependent phosphorylation on both N-terminal Thr-31 and C-terminal Ser-205 regulates AANAT activity by promoting interaction with 14-3-3 proteins. High levels in pineal gland and retina.

It is found in the cytoplasm. It carries out the reaction a 2-arylethylamine + acetyl-CoA = an N-acetyl-2-arylethylamine + CoA + H(+). It functions in the pathway aromatic compound metabolism; melatonin biosynthesis; melatonin from serotonin: step 1/2. Its function is as follows. Controls the night/day rhythm of melatonin production in the pineal gland. Catalyzes the N-acetylation of serotonin into N-acetylserotonin, the penultimate step in the synthesis of melatonin. In Bos taurus (Bovine), this protein is Serotonin N-acetyltransferase (AANAT).